The chain runs to 90 residues: Acylphosphatase (90 aa).

The 88-residue stretch at Lys3–Tyr90 folds into the Acylphosphatase-like domain. Catalysis depends on residues Arg18 and Asn36.

The protein belongs to the acylphosphatase family.

The enzyme catalyses an acyl phosphate + H2O = a carboxylate + phosphate + H(+). The chain is Acylphosphatase (acyP) from Pasteurella multocida (strain Pm70).